The chain runs to 343 residues: Holliday junction branch migration complex subunit RuvB (343 aa).

The tract at residues 4-193 (TDNLTAAQPQ…FGIVSRLEFY (190 aa)) is large ATPase domain (RuvB-L). ATP is bound by residues Leu32, Arg33, Gly74, Lys77, Thr78, Thr79, 140–142 (EDY), Arg183, Tyr193, and Arg230. A Mg(2+)-binding site is contributed by Thr78. The tract at residues 194 to 264 (ENRDLTTIVS…VADAALSMLD (71 aa)) is small ATPAse domain (RuvB-S). Residues 267-343 (AQGLDVMDRK…YLHFGLPVEK (77 aa)) are head domain (RuvB-H). Positions 322 and 327 each coordinate DNA.

It belongs to the RuvB family. As to quaternary structure, homohexamer. Forms an RuvA(8)-RuvB(12)-Holliday junction (HJ) complex. HJ DNA is sandwiched between 2 RuvA tetramers; dsDNA enters through RuvA and exits via RuvB. An RuvB hexamer assembles on each DNA strand where it exits the tetramer. Each RuvB hexamer is contacted by two RuvA subunits (via domain III) on 2 adjacent RuvB subunits; this complex drives branch migration. In the full resolvosome a probable DNA-RuvA(4)-RuvB(12)-RuvC(2) complex forms which resolves the HJ.

It localises to the cytoplasm. The catalysed reaction is ATP + H2O = ADP + phosphate + H(+). In terms of biological role, the RuvA-RuvB-RuvC complex processes Holliday junction (HJ) DNA during genetic recombination and DNA repair, while the RuvA-RuvB complex plays an important role in the rescue of blocked DNA replication forks via replication fork reversal (RFR). RuvA specifically binds to HJ cruciform DNA, conferring on it an open structure. The RuvB hexamer acts as an ATP-dependent pump, pulling dsDNA into and through the RuvAB complex. RuvB forms 2 homohexamers on either side of HJ DNA bound by 1 or 2 RuvA tetramers; 4 subunits per hexamer contact DNA at a time. Coordinated motions by a converter formed by DNA-disengaged RuvB subunits stimulates ATP hydrolysis and nucleotide exchange. Immobilization of the converter enables RuvB to convert the ATP-contained energy into a lever motion, pulling 2 nucleotides of DNA out of the RuvA tetramer per ATP hydrolyzed, thus driving DNA branch migration. The RuvB motors rotate together with the DNA substrate, which together with the progressing nucleotide cycle form the mechanistic basis for DNA recombination by continuous HJ branch migration. Branch migration allows RuvC to scan DNA until it finds its consensus sequence, where it cleaves and resolves cruciform DNA. The polypeptide is Holliday junction branch migration complex subunit RuvB (Neisseria gonorrhoeae (strain NCCP11945)).